Reading from the N-terminus, the 165-residue chain is Shikimate kinase (165 aa).

12–17 (GCGKST) contacts ATP. Serine 16 contacts Mg(2+). Substrate-binding residues include aspartate 34, arginine 57, and glycine 79. Arginine 116 provides a ligand contact to ATP. Arginine 133 provides a ligand contact to substrate.

It belongs to the shikimate kinase family. Monomer. It depends on Mg(2+) as a cofactor.

Its subcellular location is the cytoplasm. The enzyme catalyses shikimate + ATP = 3-phosphoshikimate + ADP + H(+). Its pathway is metabolic intermediate biosynthesis; chorismate biosynthesis; chorismate from D-erythrose 4-phosphate and phosphoenolpyruvate: step 5/7. Catalyzes the specific phosphorylation of the 3-hydroxyl group of shikimic acid using ATP as a cosubstrate. The polypeptide is Shikimate kinase (Clostridium botulinum (strain Alaska E43 / Type E3)).